The sequence spans 371 residues: Chaperone protein DnaJ (371 aa).

A J domain is found at E5–G69. The CR-type zinc finger occupies G127–T209. The Zn(2+) site is built by C140, C143, C157, C160, C183, C186, C197, and C200. 4 CXXCXGXG motif repeats span residues C140–G147, C157–G164, C183–G190, and C197–G204.

The protein belongs to the DnaJ family. As to quaternary structure, homodimer. The cofactor is Zn(2+).

The protein resides in the cytoplasm. Functionally, participates actively in the response to hyperosmotic and heat shock by preventing the aggregation of stress-denatured proteins and by disaggregating proteins, also in an autonomous, DnaK-independent fashion. Unfolded proteins bind initially to DnaJ; upon interaction with the DnaJ-bound protein, DnaK hydrolyzes its bound ATP, resulting in the formation of a stable complex. GrpE releases ADP from DnaK; ATP binding to DnaK triggers the release of the substrate protein, thus completing the reaction cycle. Several rounds of ATP-dependent interactions between DnaJ, DnaK and GrpE are required for fully efficient folding. Also involved, together with DnaK and GrpE, in the DNA replication of plasmids through activation of initiation proteins. This is Chaperone protein DnaJ from Streptococcus agalactiae serotype Ia (strain ATCC 27591 / A909 / CDC SS700).